A 558-amino-acid polypeptide reads, in one-letter code: MDLLHKAKLAPLLPGVYIFYGKNKEYIYVGKAKRLRNRLLSYFNRSNGKYSKKIQAIVNEAEELDYIVVSNEREALLLEANLIFNHKPKYNVMLKDAEFYPYIEITKELFPAVQIVRIRSTGGEYFGPYTDVKFVKDLIDCLQQVYQFRTCRRDMSKSTKPCMEFYMHRCAAPCTGDLEPDSYINSSIQPLRRVLNGDISETLDLIEEKMKKHAKMMDFENAAKYRDLLVKFENVMQRQGVVLEQWRNLDVIGRFKNSYAVLRIRGGHVVGKLSYELDSTKLEDFIFHYYMVGKNELPEAVILERNINFDAEIYFGRPRDKLEEELLHKARENAKNQAYTSGLRKDLLNKMVKVLNLNRYPMKIEGFDVSHLHGKLTVASVVVFFDGLPRKNEYRHYRFNSDRIDDFLTLKELVKRRYSKHELPDMIFVDGGTGQINAVVEALMEIGKECDVVGLAKQNEIVCTRFGELILPFDSPILRTLVRIRDEAHRFANSFHRKLRRKSALSSILDEIPGIGPKRKKKLIEAFGSVKNIRSATLQEIAEVLGSRKLAAEILSRL.

A GIY-YIG domain is found at 12–92 (LLPGVYIFYG…IFNHKPKYNV (81 aa)). Residues 200–235 (SETLDLIEEKMKKHAKMMDFENAAKYRDLLVKFENV) enclose the UVR domain.

It belongs to the UvrC family. As to quaternary structure, interacts with UvrB in an incision complex.

It localises to the cytoplasm. Its function is as follows. The UvrABC repair system catalyzes the recognition and processing of DNA lesions. UvrC both incises the 5' and 3' sides of the lesion. The N-terminal half is responsible for the 3' incision and the C-terminal half is responsible for the 5' incision. The chain is UvrABC system protein C from Pseudothermotoga lettingae (strain ATCC BAA-301 / DSM 14385 / NBRC 107922 / TMO) (Thermotoga lettingae).